We begin with the raw amino-acid sequence, 329 residues long: Mitochondrial substrate carrier family protein W (329 aa).

Residues 1 to 39 (MTTNNSNDNNKRYGIIKQQLQQQQQQHHQQHEQHSRLVE) lie on the Mitochondrial intermembrane side of the membrane. 3 Solcar repeats span residues 34–119 (HSRL…CKEL), 133–221 (ESPL…FKSI), and 231–321 (LGIV…IKKF). Residues 40–60 (MTAGCGAGFMASLFTTPLDVI) traverse the membrane as a helical segment. Residues 61-90 (KTTLQVDNSSNKTIMSTVKSILDRKGGVKN) lie on the Mitochondrial matrix side of the membrane. The chain crosses the membrane as a helical span at residues 91-111 (LYLGLKPTLVGQIPSWAVYFS). Topologically, residues 112-135 (TYTFCKELFTKENDKHSLLEKESP) are mitochondrial intermembrane. Residues 136 to 156 (LIFMTSAIIAGAATSICTSPI) traverse the membrane as a helical segment. Over 157 to 193 (WLIKTRFITQEMVGRQKKYRGIVHSMVSIYHEEGFRG) the chain is Mitochondrial matrix. Residues 194–214 (LYKGLGPSLLGVLHVGVQFPL) traverse the membrane as a helical segment. Residues 215-230 (YEKFKSILKEKNKNKE) are Mitochondrial intermembrane-facing. The helical transmembrane segment at 231–251 (LGIVEIMIASSVSKIIASVVA) threads the bilayer. The Mitochondrial matrix segment spans residues 252 to 296 (YPHEVLRARSQDSSPDSPNRTYRGNIIQMFKQIVREEGWRGLYRG). Residues 297-315 (MGVNLLRVTPSCVITFTSY) traverse the membrane as a helical segment. Over 316 to 329 (EYIKKFLSQNQNHF) the chain is Mitochondrial intermembrane.

The protein belongs to the mitochondrial carrier (TC 2.A.29) family.

It localises to the mitochondrion inner membrane. In terms of biological role, mitochondrial solute carriers shuttle metabolites, nucleotides, and cofactors through the mitochondrial inner membrane. The sequence is that of Mitochondrial substrate carrier family protein W (mcfW) from Dictyostelium discoideum (Social amoeba).